The primary structure comprises 287 residues: ATP synthase subunit a (287 aa).

6 consecutive transmembrane segments (helical) span residues 37–57 (LDSV…MWLA), 96–116 (FIAP…AMDL), 144–164 (DLST…VYSI), 187–207 (PVFA…EYVA), 224–244 (ELVF…LSGV), and 266–286 (TLQA…AHEA).

It belongs to the ATPase A chain family. In terms of assembly, F-type ATPases have 2 components, CF(1) - the catalytic core - and CF(0) - the membrane proton channel. CF(1) has five subunits: alpha(3), beta(3), gamma(1), delta(1), epsilon(1). CF(0) has three main subunits: a(1), b(2) and c(9-12). The alpha and beta chains form an alternating ring which encloses part of the gamma chain. CF(1) is attached to CF(0) by a central stalk formed by the gamma and epsilon chains, while a peripheral stalk is formed by the delta and b chains.

Its subcellular location is the cell inner membrane. Key component of the proton channel; it plays a direct role in the translocation of protons across the membrane. This chain is ATP synthase subunit a, found in Acidovorax ebreus (strain TPSY) (Diaphorobacter sp. (strain TPSY)).